The following is a 426-amino-acid chain: Transcriptional enhancer factor TEF-1 (426 aa).

M1 is modified (N-acetylmethionine). Residues M1–P12 are compositionally biased toward polar residues. The tract at residues M1–A31 is disordered. S11 is modified (phosphoserine). Positions N15 to D28 are enriched in basic and acidic residues. The TEA DNA-binding region spans D28–D104. The residue at position 108 (K108) is an N6-lactoyllysine. Positions G167–D426 are transcriptional activation.

As to quaternary structure, interacts with YAP1 and WWTR1/TAZ. Post-translationally, lactylation by AARS1 promotes nuclear localization and stabilization of YAP1, leading to increased Hippo signaling pathway. Delactylated by SIRT1. As to expression, in developing skeletal muscle and myocardium, in mitotic neuroblasts both in the brain and spinal cord. At later stages of embryogenesis expressed in several developing structures such as the olfactory system, the intestine, and the kidney.

Its subcellular location is the nucleus. Its function is as follows. Transcription factor which plays a key role in the Hippo signaling pathway, a pathway involved in organ size control and tumor suppression by restricting proliferation and promoting apoptosis. The core of this pathway is composed of a kinase cascade wherein MST1/MST2, in complex with its regulatory protein SAV1, phosphorylates and activates LATS1/2 in complex with its regulatory protein MOB1, which in turn phosphorylates and inactivates YAP1 oncoprotein and WWTR1/TAZ. Acts by mediating gene expression of YAP1 and WWTR1/TAZ, thereby regulating cell proliferation, migration and epithelial mesenchymal transition (EMT) induction. Binds specifically and cooperatively to the SPH and GT-IIC 'enhansons' (5'-GTGGAATGT-3') and activates transcription in vivo in a cell-specific manner. The activation function appears to be mediated by a limiting cell-specific transcriptional intermediary factor (TIF). Involved in cardiac development. Binds to the M-CAT motif. In Mus musculus (Mouse), this protein is Transcriptional enhancer factor TEF-1 (Tead1).